We begin with the raw amino-acid sequence, 222 residues long: Small ribosomal subunit protein eS1 (222 aa).

The protein belongs to the eukaryotic ribosomal protein eS1 family.

This Pyrobaculum islandicum (strain DSM 4184 / JCM 9189 / GEO3) protein is Small ribosomal subunit protein eS1.